The following is a 90-amino-acid chain: Mitochondrial import inner membrane translocase subunit Tim10-B (90 aa).

The Twin CX3C motif motif lies at 29–54 (CHKKCVPPHYKEAELSKGESVCLDRC). 2 disulfides stabilise this stretch: Cys-29–Cys-54 and Cys-33–Cys-50.

Belongs to the small Tim family. As to quaternary structure, heterohexamer; composed of 3 copies of TIMM9 and 3 copies of TIMM10/TIM10A, named soluble 70 kDa complex. The complex forms a 6-bladed alpha-propeller structure and associates with the TIMM22 component of the TIM22 complex. Interacts with multi-pass transmembrane proteins in transit.

The protein resides in the mitochondrion inner membrane. Functionally, mitochondrial intermembrane chaperone that participates in the import and insertion of multi-pass transmembrane proteins into the mitochondrial inner membrane. May also be required for the transfer of beta-barrel precursors from the TOM complex to the sorting and assembly machinery (SAM complex) of the outer membrane. Acts as a chaperone-like protein that protects the hydrophobic precursors from aggregation and guide them through the mitochondrial intermembrane space. This is Mitochondrial import inner membrane translocase subunit Tim10-B (timm10-b) from Xenopus laevis (African clawed frog).